Reading from the N-terminus, the 119-residue chain is Ribonuclease P protein component (119 aa).

Belongs to the RnpA family. As to quaternary structure, consists of a catalytic RNA component (M1 or rnpB) and a protein subunit.

It carries out the reaction Endonucleolytic cleavage of RNA, removing 5'-extranucleotides from tRNA precursor.. Functionally, RNaseP catalyzes the removal of the 5'-leader sequence from pre-tRNA to produce the mature 5'-terminus. It can also cleave other RNA substrates such as 4.5S RNA. The protein component plays an auxiliary but essential role in vivo by binding to the 5'-leader sequence and broadening the substrate specificity of the ribozyme. This is Ribonuclease P protein component from Edwardsiella ictaluri (strain 93-146).